The following is a 479-amino-acid chain: MAGSLKKLAKAESCRLMQEKLESWSKDYEINSCDQNLNQCCELIEMTSVIQGQLFTILNETSRESGHYAGVDTIKTRLLPWLGTWFSHATSGRLFETGLFLNQDSTETERKLRQLATSQTLQLQDLQEELTSTRLELNHVQQDLAQTQLALEDTKTQLATTLLTAADEIIQLRAVLKASRAQEEDSLRRLDHLNDCEQQIERLRDELSILDAQKSVLQSRIARSRSPSPRRIRSRSPSPLPLRSCSPGRARSTNASRHAFLVARFGDIYSKDRFDAERILRTYISDMEMVQRIIYTAAVESFHAAKMAYRQFKMRVRKTLSIGHSGPESLEDTVMDYIVRHEDLYDVQASVNEVIRSMNINPKISSTPECDFAVISSFIRELCRVAFSMQTLTPPLDVAFGMDGEFFSETKYHRSVDSDYTAALVAYHVWPALMENDVVIVKGEAVTKRGALWSHRSRSRSQNRSRSVSPLLSHLSRSR.

2 coiled-coil regions span residues 109–161 (ERKL…LATT) and 187–223 (LRRL…RIAR). 2 disordered regions span residues 220–251 (RIAR…GRAR) and 456–479 (RSRS…SRSR). Residues 235–249 (RSPSPLPLRSCSPGR) are compositionally biased toward low complexity.

The protein belongs to the MIEAP family.

The protein localises to the cytoplasm. Its subcellular location is the cytosol. The protein resides in the mitochondrion outer membrane. It is found in the mitochondrion matrix. In terms of biological role, key regulator of mitochondrial quality that mediates the repairing or degradation of unhealthy mitochondria in response to mitochondrial damage. Mediator of mitochondrial protein catabolic process (also named MALM) by mediating the degradation of damaged proteins inside mitochondria by promoting the accumulation in the mitochondrial matrix of hydrolases that are characteristic of the lysosomal lumen. Also involved in mitochondrion degradation of damaged mitochondria by promoting the formation of vacuole-like structures (named MIV), which engulf and degrade unhealthy mitochondria by accumulating lysosomes. Binds cardiolipin. May form molecular condensates (non-membrane-bounded organelles) within mitochondria that compartmentalize and promote cardiolipin metabolism. The sequence is that of Mitochondria-eating protein (SPATA18) from Gallus gallus (Chicken).